Consider the following 242-residue polypeptide: DNA repair protein RecO (242 aa).

The protein belongs to the RecO family. Monomer.

Functionally, involved in DNA repair and RecF pathway recombination. The chain is DNA repair protein RecO from Salmonella dublin (strain CT_02021853).